The sequence spans 418 residues: Zinc metalloproteinase nas-8 (418 aa).

Positions M1 to A28 are cleaved as a signal peptide. A propeptide spanning residues Q29–R100 is cleaved from the precursor. The Peptidase M12A domain occupies N101–P296. Cystine bridges form between C143–C295, C165–C184, C347–C381, C354–C374, and C361–C378. H192 lines the Zn(2+) pocket. E193 is an active-site residue. The Zn(2+) site is built by H196 and H202. A ShKT domain is found at C347–C381.

It depends on Zn(2+) as a cofactor.

Its subcellular location is the secreted. It carries out the reaction Hydrolysis of peptide bonds in substrates containing five or more amino acids, preferentially with Ala in P1', and Pro in P2'.. With respect to regulation, inhibited by ethylene glycol-bis(2-aminoethylether)-N,N,N,N-tetraacetic acid (EGTA), ethylenediaminetetraacetic acid (EDTA) and o-phenanthroline. In terms of biological role, metalloprotease. The sequence is that of Zinc metalloproteinase nas-8 from Steinernema carpocapsae (Entomopathogenic nematode).